Reading from the N-terminus, the 527-residue chain is Bifunctional purine biosynthesis protein PurH (527 aa).

The 149-residue stretch at 8 to 156 folds into the MGS-like domain; sequence AGAKRPIRRA…KNHPSVAVVV (149 aa).

It belongs to the PurH family.

The enzyme catalyses (6R)-10-formyltetrahydrofolate + 5-amino-1-(5-phospho-beta-D-ribosyl)imidazole-4-carboxamide = 5-formamido-1-(5-phospho-D-ribosyl)imidazole-4-carboxamide + (6S)-5,6,7,8-tetrahydrofolate. The catalysed reaction is IMP + H2O = 5-formamido-1-(5-phospho-D-ribosyl)imidazole-4-carboxamide. Its pathway is purine metabolism; IMP biosynthesis via de novo pathway; 5-formamido-1-(5-phospho-D-ribosyl)imidazole-4-carboxamide from 5-amino-1-(5-phospho-D-ribosyl)imidazole-4-carboxamide (10-formyl THF route): step 1/1. It functions in the pathway purine metabolism; IMP biosynthesis via de novo pathway; IMP from 5-formamido-1-(5-phospho-D-ribosyl)imidazole-4-carboxamide: step 1/1. The sequence is that of Bifunctional purine biosynthesis protein PurH from Mycobacterium sp. (strain JLS).